The primary structure comprises 610 residues: Propanediol dehydratase-reactivating factor large subunit (610 aa).

11 to 13 (NSS) contributes to the ATP binding site. The Mg(2+) site is built by T105, D166, and D183. ATP contacts are provided by residues 459-462 (EEIK), 557-558 (GS), and R591.

It belongs to the DdrA/PduG family. Forms a heterotetramer PduG(2)/PduH(2). Mg(2+) is required as a cofactor.

It is found in the bacterial microcompartment. It carries out the reaction ATP + H2O = ADP + phosphate + H(+). Its pathway is polyol metabolism; 1,2-propanediol degradation. Functionally, large subunit of the propanediol dehydratase-reactivating factor (DDR), which reactivates suicidally inhibited adenosylcobalamin-dependent propanediol dehydratase (diol dehydratase, DDH) found in the bacterial microcompartment (BMC) dedicated to 1,2-propanediol (1,2-PD) degradation. Reactivates inactivated DDH in the presence of ATP, Mg(2+) and free adenosylcobalamin (AdoCbl), by mediating the exchange of the tightly bound damaged cofactor AdoCbl for a free intact one. This subunit contains the adenosine nucleotide binding site. The 1,2-PD-specific bacterial microcompartment (BMC) concentrates low levels of 1,2-PD catabolic enzymes, concentrates volatile reaction intermediates thus enhancing pathway flux and keeps the level of toxic, mutagenic propionaldehyde low. The polypeptide is Propanediol dehydratase-reactivating factor large subunit (Salmonella typhimurium (strain LT2 / SGSC1412 / ATCC 700720)).